Reading from the N-terminus, the 905-residue chain is Protein translocase subunit SecA (905 aa).

Residues glutamine 89, 107 to 111 (GEGKT), and aspartate 502 contribute to the ATP site. The Zn(2+) site is built by cysteine 887, cysteine 889, cysteine 898, and histidine 899.

Belongs to the SecA family. As to quaternary structure, monomer and homodimer. Part of the essential Sec protein translocation apparatus which comprises SecA, SecYEG and auxiliary proteins SecDF-YajC and YidC. It depends on Zn(2+) as a cofactor.

It is found in the cell inner membrane. It localises to the cytoplasm. It catalyses the reaction ATP + H2O + cellular proteinSide 1 = ADP + phosphate + cellular proteinSide 2.. Part of the Sec protein translocase complex. Interacts with the SecYEG preprotein conducting channel. Has a central role in coupling the hydrolysis of ATP to the transfer of proteins into and across the cell membrane, serving both as a receptor for the preprotein-SecB complex and as an ATP-driven molecular motor driving the stepwise translocation of polypeptide chains across the membrane. This is Protein translocase subunit SecA from Rhizobium leguminosarum bv. trifolii (strain WSM2304).